Here is a 512-residue protein sequence, read N- to C-terminus: Alpha-amylase (512 aa).

The first 29 residues, 1-29, serve as a signal peptide directing secretion; sequence MKQQKRLYARLLTLLFALIFLLPHSAAAA. Asn-133, Asp-190, Ala-210, Asp-212, Asp-223, Asp-229, Asp-231, and Asp-233 together coordinate Ca(2+). Asp-190 serves as a coordination point for Na(+). The Na(+) site is built by Asp-212, Asp-223, and Asp-229. Asp-260 acts as the Nucleophile in catalysis. His-264 provides a ligand contact to Ca(2+). Glu-290 (proton donor) is an active-site residue. The Ca(2+) site is built by Gly-329, Tyr-331, His-435, Asp-436, and Asp-459.

It belongs to the glycosyl hydrolase 13 family. As to quaternary structure, monomer. It depends on Ca(2+) as a cofactor. The cofactor is Na(+).

The protein resides in the secreted. It carries out the reaction Endohydrolysis of (1-&gt;4)-alpha-D-glucosidic linkages in polysaccharides containing three or more (1-&gt;4)-alpha-linked D-glucose units.. The protein is Alpha-amylase (amyS) of Bacillus licheniformis.